A 513-amino-acid polypeptide reads, in one-letter code: MVSRLSKRYRSRVQFSISVMDENIYLSLSQINKDIRKENKSVRNRLQSILLDNKFLQDRVIPIFPHYPLIPNERCGLWYCNPSSFKQTSYFKSTDGHVNQWDFSTRRLNFHLLETIRDNKGIIIVDSTRRGKKIPDALSKTVPIWCAVLNTLMLQETEKNVAIDKVLYLPPETVPKSEYDMIKRKIPELVAKLQKLNIIDSKKLNELFMGKLLRPIWVHPGSSLLDHSVDYFTGEVQEYEAWETPEDQNIIPIILCTVSYQAQDGMDKRYGFTYVQGAADDHELWSFGLDSNMFWAHIEYLGDASYSDDQLHDYIMDLAAAKLRNQCYIQDKGSLDEVFGNIDKITNEISLGKVSSGLTINKNLKQKLKSEYGKVIIFSNSVTVAEDTDDEEESGTDPFISIYKLQSGDKKSSKALRSTFPRIHGEIQSLFTNRDEKIKPMLICCNTGTDMSIGVILSILCTKYTEEWMLTSELPDISKLIVRKHLTKLISHLKGRNVNPSRATLNSVNSFLM.

Its function is as follows. tRNA backbone modifying enzyme that mediates initiator/ elongator tRNA discrimination. This enzyme modifies exclusively the initiator tRNA in position 64 using 5'-phosphoribosyl-1'-pyrophosphate as the modification donor. Recognize the stem-loop IV region that is unique in eukaryotic cytoplasmic initiator tRNAs. This Saccharomyces cerevisiae (strain ATCC 204508 / S288c) (Baker's yeast) protein is tRNA A64-2'-O-ribosylphosphate transferase (RIT1).